A 216-amino-acid polypeptide reads, in one-letter code: NKG2-D type II integral membrane protein (216 aa).

Topologically, residues 1–51 are cytoplasmic; sequence MGWIRGRRPRHNLEMSEFHNYKLGLAKSDFSTRCQKQRCPVIKSKCRENAS. A helical; Signal-anchor for type II membrane protein transmembrane segment spans residues 52–72; the sequence is PLFFCCFIAVAMGIRFIIMVT. Topologically, residues 73–216 are extracellular; that stretch reads IWSAVFLNSL…NTYICMQRTV (144 aa). 2 disulfide bridges follow: cysteine 96/cysteine 105 and cysteine 99/cysteine 110. Residues 98–213 form the C-type lectin domain; the sequence is PCPKNWICYK…SIPNTYICMQ (116 aa). Asparagine 115, asparagine 131, asparagine 163, and asparagine 202 each carry an N-linked (GlcNAc...) asparagine glycan. 2 cysteine pairs are disulfide-bonded: cysteine 127–cysteine 211 and cysteine 189–cysteine 203.

Homodimer; disulfide-linked. Heterohexamer composed of two subunits of KLRK1 and four subunits of HCST/DAP10. Interacts (via transmembrane domain) with HCST/DAP10 (via transmembrane domain); the interaction is required for KLRK1 NK cell surface and induces NK cell-mediated cytotoxicity. Can form disulfide-bonded heterodimer with CD94. Interacts with CEACAM1; recruits PTPN6 that dephosphorylates VAV1. Natural killer cells.

The protein resides in the cell membrane. Functions as an activating and costimulatory receptor involved in immunosurveillance upon binding to various cellular stress-inducible ligands displayed at the surface of autologous tumor cells and virus-infected cells. Provides both stimulatory and costimulatory innate immune responses on activated killer (NK) cells, leading to cytotoxic activity. Acts as a costimulatory receptor for T-cell receptor (TCR) in CD8(+) T-cell-mediated adaptive immune responses by amplifying T-cell activation. Stimulates perforin-mediated elimination of ligand-expressing tumor cells. Signaling involves calcium influx, culminating in the expression of TNF-alpha. Participates in NK cell-mediated bone marrow graft rejection. May play a regulatory role in differentiation and survival of NK cells. Binds to ligands belonging to various subfamilies of MHC class I-related glycoproteins. This Macaca fascicularis (Crab-eating macaque) protein is NKG2-D type II integral membrane protein (KLRK1).